We begin with the raw amino-acid sequence, 360 residues long: Diacylglycerol O-acyltransferase 3 (360 aa).

Residues 153 to 182 form a disordered region; the sequence is KAKAMKKMTEMDSESSSSSESSDSDCDKGK. Residues C265, C270, C298, and C302 each coordinate [2Fe-2S] cluster.

It belongs to the diacylglycerol acyltransferase family. Requires [2Fe-2S] cluster as cofactor.

It carries out the reaction an acyl-CoA + a 1,2-diacyl-sn-glycerol = a triacyl-sn-glycerol + CoA. It functions in the pathway glycerolipid metabolism; triacylglycerol biosynthesis. In terms of biological role, involved in triacylglycerol (TAG) biosynthesis. Catalyzes the acylation of the sn-3 hydroxy group of sn-1,2-diacylglycerol using acyl-CoA. May preferentially use linolenoyl-CoA as substrate and to a lesser extent linoleoyl-CoA. May contribute to the active recycling of linoleate and linolenate into TAG when seed oil breakdown is blocked. In Arabidopsis thaliana (Mouse-ear cress), this protein is Diacylglycerol O-acyltransferase 3.